Consider the following 888-residue polypeptide: Valine--tRNA ligase (888 aa).

Residues 43–53 (PFTSGTLHLGH) carry the 'HIGH' region motif. Residues 534 to 538 (KMSKS) carry the 'KMSKS' region motif. An ATP-binding site is contributed by Lys537.

Belongs to the class-I aminoacyl-tRNA synthetase family. ValS type 2 subfamily.

The protein localises to the cytoplasm. It catalyses the reaction tRNA(Val) + L-valine + ATP = L-valyl-tRNA(Val) + AMP + diphosphate. Functionally, catalyzes the attachment of valine to tRNA(Val). As ValRS can inadvertently accommodate and process structurally similar amino acids such as threonine, to avoid such errors, it has a 'posttransfer' editing activity that hydrolyzes mischarged Thr-tRNA(Val) in a tRNA-dependent manner. In Thermococcus kodakarensis (strain ATCC BAA-918 / JCM 12380 / KOD1) (Pyrococcus kodakaraensis (strain KOD1)), this protein is Valine--tRNA ligase.